A 110-amino-acid chain; its full sequence is Nucleoid-associated protein Mkms_4993 (110 aa).

This sequence belongs to the YbaB/EbfC family. As to quaternary structure, homodimer.

It localises to the cytoplasm. The protein localises to the nucleoid. Its function is as follows. Binds to DNA and alters its conformation. May be involved in regulation of gene expression, nucleoid organization and DNA protection. The chain is Nucleoid-associated protein Mkms_4993 from Mycobacterium sp. (strain KMS).